The sequence spans 430 residues: Enolase (430 aa).

Gln-165 is a binding site for (2R)-2-phosphoglycerate. Glu-207 serves as the catalytic Proton donor. Positions 244, 287, and 314 each coordinate Mg(2+). (2R)-2-phosphoglycerate contacts are provided by Lys-339, Arg-368, Ser-369, and Lys-390. Catalysis depends on Lys-339, which acts as the Proton acceptor.

This sequence belongs to the enolase family. As to quaternary structure, component of the RNA degradosome, a multiprotein complex involved in RNA processing and mRNA degradation. Requires Mg(2+) as cofactor.

It localises to the cytoplasm. It is found in the secreted. The protein resides in the cell surface. It carries out the reaction (2R)-2-phosphoglycerate = phosphoenolpyruvate + H2O. It participates in carbohydrate degradation; glycolysis; pyruvate from D-glyceraldehyde 3-phosphate: step 4/5. Catalyzes the reversible conversion of 2-phosphoglycerate (2-PG) into phosphoenolpyruvate (PEP). It is essential for the degradation of carbohydrates via glycolysis. The sequence is that of Enolase from Xanthomonas axonopodis pv. citri (strain 306).